The primary structure comprises 398 residues: Protein trichome birefringence-like 45 (398 aa).

Residues 1–21 (MAAVQCLTFLFLFLLQNATSA) traverse the membrane as a helical; Signal-anchor for type II membrane protein segment. The GDS motif motif lies at 131-133 (GDS). Residues 375-389 (DCSHWCLPGLPDTWN) carry the DCXHWCLPGXXDXWN motif motif.

Belongs to the PC-esterase family. TBL subfamily.

It localises to the membrane. Functionally, may act as a bridging protein that binds pectin and other cell wall polysaccharides. Probably involved in maintaining esterification of pectins. May be involved in the specific O-acetylation of cell wall polymers. The protein is Protein trichome birefringence-like 45 (TBL45) of Arabidopsis thaliana (Mouse-ear cress).